Consider the following 339-residue polypeptide: D-erythrose-4-phosphate dehydrogenase (339 aa).

NAD(+) is bound at residue 12–13 (RI). Substrate contacts are provided by residues 154–156 (SCT), R200, 213–214 (TK), and R236. The Nucleophile role is filled by C155. N318 provides a ligand contact to NAD(+).

The protein belongs to the glyceraldehyde-3-phosphate dehydrogenase family. Epd subfamily. Homotetramer.

It localises to the cytoplasm. It carries out the reaction D-erythrose 4-phosphate + NAD(+) + H2O = 4-phospho-D-erythronate + NADH + 2 H(+). Its pathway is cofactor biosynthesis; pyridoxine 5'-phosphate biosynthesis; pyridoxine 5'-phosphate from D-erythrose 4-phosphate: step 1/5. Functionally, catalyzes the NAD-dependent conversion of D-erythrose 4-phosphate to 4-phosphoerythronate. This Photorhabdus laumondii subsp. laumondii (strain DSM 15139 / CIP 105565 / TT01) (Photorhabdus luminescens subsp. laumondii) protein is D-erythrose-4-phosphate dehydrogenase.